The sequence spans 210 residues: High mobility group protein B2 (210 aa).

Lys-3 bears the N6-acetyllysine mark. A DNA-binding region (HMG box 1) is located at residues 9-79; the sequence is PRGKMSSYAF…RYDREMKNYV (71 aa). Residue Cys-23 is modified to Cysteine sulfonic acid (-SO3H); alternate. An intrachain disulfide couples Cys-23 to Cys-45. N6-acetyllysine is present on Lys-30. Ser-35 carries the post-translational modification Phosphoserine. Position 43 is an N6-acetyllysine (Lys-43). At Cys-45 the chain carries Cysteine sulfonic acid (-SO3H); alternate. Residues 51 to 76 are compositionally biased toward basic and acidic residues; sequence TMSAKEKSKFEDLAKSDKARYDREMK. Positions 51-102 are disordered; it reads TMSAKEKSKFEDLAKSDKARYDREMKNYVPPKGDKKGKKKDPNAPKRPPSAF. Lys-90 is modified (N6-acetyllysine). A DNA-binding region (HMG box 2) is located at residues 95–163; that stretch reads PKRPPSAFFL…KYEKDIAAYR (69 aa). At Ser-100 the chain carries Phosphoserine. A Cysteine sulfonic acid (-SO3H) modification is found at Cys-106. 2 positions are modified to N6-acetyllysine: Lys-114 and Lys-141. The span at 162–172 shows a compositional bias: basic and acidic residues; that stretch reads YRAKGKSEVGK. Positions 162 to 210 are disordered; the sequence is YRAKGKSEVGKKGPGRPTGSKKKNEPEDEEEEEEEEDDEDEEEEDEDEE. Positions 165-180 are required for chemotactic activity; it reads KGKSEVGKKGPGRPTG. Over residues 187–210 the composition is skewed to acidic residues; that stretch reads PEDEEEEEEEEDDEDEEEEDEDEE.

This sequence belongs to the HMGB family. Interacts with POU2F2, POU2F1 and POU3F1. Component of the RAG complex composed of core components RAG1 and RAG2, and associated component HMGB1 or HMGB2. Component of the SET complex, composed of at least ANP32A, APEX1, HMGB2, NME1, SET and TREX1. Directly interacts with SET. Interacts with LEF1. In terms of processing, reduction/oxidation of cysteine residues Cys-23, Cys-45 and Cys-106 and a possible intramolecular disulfide bond involving Cys-23 and Cys-45 give rise to different redox forms with specific functional activities in various cellular compartments: 1- fully reduced HMGB2 (HMGB2C23hC45hC106h), 2- disulfide HMGB2 (HMGB2C23-C45C106h) and 3- sulfonyl HMGB2 (HMGB2C23soC45soC106so).

It localises to the nucleus. The protein localises to the chromosome. Its subcellular location is the cytoplasm. It is found in the secreted. In terms of biological role, multifunctional protein with various roles in different cellular compartments. May act in a redox sensitive manner. In the nucleus is an abundant chromatin-associated non-histone protein involved in transcription, chromatin remodeling and V(D)J recombination and probably other processes. Binds DNA with a preference to non-canonical DNA structures such as single-stranded DNA. Can bent DNA and enhance DNA flexibility by looping thus providing a mechanism to promote activities on various gene promoters by enhancing transcription factor binding and/or bringing distant regulatory sequences into close proximity. Involved in V(D)J recombination by acting as a cofactor of the RAG complex: acts by stimulating cleavage and RAG protein binding at the 23 bp spacer of conserved recombination signal sequences (RSS). Proposed to be involved in the innate immune response to nucleic acids by acting as a cytoplasmic promiscuous immunogenic DNA/RNA sensor which cooperates with subsequent discriminative sensing by specific pattern recognition receptors. In the extracellular compartment acts as a chemokine. Promotes proliferation and migration of endothelial cells implicating AGER/RAGE. Has antimicrobial activity in gastrointestinal epithelial tissues. Involved in inflammatory response to antigenic stimulus coupled with pro-inflammatory activity. May play a role in germ cell differentiation. Involved in modulation of neurogenesis probably by regulation of neural stem proliferation. Involved in articular cartilage surface maintenance implicating LEF1 and the Wnt/beta-catenin pathway. In Rattus norvegicus (Rat), this protein is High mobility group protein B2 (Hmgb2).